An 88-amino-acid polypeptide reads, in one-letter code: U24 protein (88 aa).

At Thr-6 the chain carries Phosphothreonine. The PPXY motif signature appears at 8 to 11 (PPSY). Residues 58-78 (FAFLVLTGLAIAMILFIAFVI) traverse the membrane as a helical segment.

Interacts with host ITCH; this interaction probably mediates ITCH degradation. Interacts probably with NEDD4.

The protein localises to the membrane. Functionally, down-regulates the TCR/CD3E complex and the transferrin receptor TFRC in host T-cells by blocking them from recycling back to the cell surface. In Human herpesvirus 6B (strain Z29) (HHV-6 variant B), this protein is U24 protein (U24).